The chain runs to 670 residues: NAD(P)H-quinone oxidoreductase subunit 5, chloroplastic (670 aa).

A run of 16 helical transmembrane segments spans residues 9-29, 39-59, 85-105, 120-140, 144-164, 188-208, 215-235, 258-278, 290-310, 327-347, 354-374, 395-415, 424-444, 479-499, 534-554, and 648-668; these read GLIP…LMSF, FVGS…LLFF, IGYL…SVAV, GYIR…GLIV, LIQV…LVGF, GLLL…FDII, LLLT…LLFL, TPIS…FLVA, LMIL…CLAV, LGYM…FHLI, ALLF…VGYD, GVTF…ACFW, AFFH…LTGF, MTLP…LGLP, SATS…LYSP, and LFVI…NSVF.

Belongs to the complex I subunit 5 family. NDH is composed of at least 16 different subunits, 5 of which are encoded in the nucleus.

Its subcellular location is the plastid. The protein localises to the chloroplast thylakoid membrane. It carries out the reaction a plastoquinone + NADH + (n+1) H(+)(in) = a plastoquinol + NAD(+) + n H(+)(out). It catalyses the reaction a plastoquinone + NADPH + (n+1) H(+)(in) = a plastoquinol + NADP(+) + n H(+)(out). Functionally, NDH shuttles electrons from NAD(P)H:plastoquinone, via FMN and iron-sulfur (Fe-S) centers, to quinones in the photosynthetic chain and possibly in a chloroplast respiratory chain. The immediate electron acceptor for the enzyme in this species is believed to be plastoquinone. Couples the redox reaction to proton translocation, and thus conserves the redox energy in a proton gradient. In Chaetosphaeridium globosum (Charophycean green alga), this protein is NAD(P)H-quinone oxidoreductase subunit 5, chloroplastic (ndhF).